Reading from the N-terminus, the 180-residue chain is Segregation and condensation protein B (180 aa).

This sequence belongs to the ScpB family. Homodimer. Homodimerization may be required to stabilize the binding of ScpA to the Smc head domains. Component of a cohesin-like complex composed of ScpA, ScpB and the Smc homodimer, in which ScpA and ScpB bind to the head domain of Smc. The presence of the three proteins is required for the association of the complex with DNA.

Its subcellular location is the cytoplasm. In terms of biological role, participates in chromosomal partition during cell division. May act via the formation of a condensin-like complex containing Smc and ScpA that pull DNA away from mid-cell into both cell halves. This Staphylococcus aureus (strain Mu3 / ATCC 700698) protein is Segregation and condensation protein B.